The chain runs to 449 residues: Capsid protein (449 aa).

A DNA-binding region spans residues 1–43; the sequence is MARRARRPRGRFYAFRRGRWHHLKRLRRRYKFRHRRRQRYRRR. Positions 6 to 47 are nuclear localization signals; sequence RRPRGRFYAFRRGRWHHLKRLRRRYKFRHRRRQRYRRRAFRK.

Belongs to the gyrovirus capsid protein family. As to quaternary structure, homomultimer (Potential). Interacts with Rep; this interaction relocates Rep into the nucleus.

The protein resides in the host nucleus. The protein localises to the virion. In terms of biological role, self-assembles to form the virion icosahedral capsid with a T=1 symmetry. This very small capsid (25 nm in diameter) allows the virus to be very stable in the environment and resistant to some disinfectants, including detergents. Essential for the initial attachment to host receptors. After attachment, the virus is endocytosed and traffics to the nucleus. The capsid protein binds and transports the viral genome and Rep across the nuclear envelope. The sequence is that of Capsid protein (VP1) from Chicken anemia virus (isolate Australia) (CAV).